A 198-amino-acid polypeptide reads, in one-letter code: Cytochrome c oxidase assembly protein CtaG (198 aa).

The Cytoplasmic segment spans residues Met-1 to Arg-12. Residues Ser-13 to Ala-35 form a helical; Signal-anchor for type II membrane protein membrane-spanning segment. At Val-36 to Leu-198 the chain is on the periplasmic side.

It belongs to the COX11/CtaG family.

The protein resides in the cell inner membrane. Exerts its effect at some terminal stage of cytochrome c oxidase synthesis, probably by being involved in the insertion of the copper B into subunit I. The sequence is that of Cytochrome c oxidase assembly protein CtaG from Sinorhizobium medicae (strain WSM419) (Ensifer medicae).